Consider the following 107-residue polypeptide: Ferredoxin 1 (107 aa).

4Fe-4S ferredoxin-type domains follow at residues 2-30 (TFVV…YEGP) and 31-60 (NFLV…SEDE). Positions 9 and 17 each coordinate [3Fe-4S] cluster. [4Fe-4S] cluster contacts are provided by Cys-21, Cys-40, Cys-43, and Cys-46. A [3Fe-4S] cluster-binding site is contributed by Cys-50.

The cofactor is [4Fe-4S] cluster. [3Fe-4S] cluster is required as a cofactor.

In terms of biological role, ferredoxins are iron-sulfur proteins that transfer electrons in a wide variety of metabolic reactions. This is Ferredoxin 1 (fdxA) from Pseudomonas putida (strain ATCC 47054 / DSM 6125 / CFBP 8728 / NCIMB 11950 / KT2440).